Consider the following 365-residue polypeptide: 1-acyl-sn-glycerol-3-phosphate acyltransferase epsilon (365 aa).

Residues 15-35 (LLPSVLLLGSAPTYLLAWTLW) traverse the membrane as a helical segment. An HXXXXD motif motif is present at residues 93–98 (HQSTVD). The helical transmembrane segment at 345–365 (LYMGTWLYGTLLGCLWFVIKA) threads the bilayer.

It belongs to the 1-acyl-sn-glycerol-3-phosphate acyltransferase family. Widely expressed.

The protein localises to the endoplasmic reticulum membrane. It localises to the nucleus envelope. The protein resides in the mitochondrion. The enzyme catalyses a 1-acyl-sn-glycero-3-phosphate + an acyl-CoA = a 1,2-diacyl-sn-glycero-3-phosphate + CoA. The catalysed reaction is 1-(9Z-octadecenoyl)-sn-glycero-3-phosphate + tetradecanoyl-CoA = 1-(9Z)-octadecenoyl-2-tetradecanoyl-sn-glycero-3-phosphate + CoA. It catalyses the reaction pentadecanoyl-CoA + 1-(9Z-octadecenoyl)-sn-glycero-3-phosphate = 1-(9Z)-octadecenoyl-2-pentadecanoyl-sn-glycero-3-phosphate + CoA. It carries out the reaction 1-(9Z-octadecenoyl)-sn-glycero-3-phosphate + octadecanoyl-CoA = 1-(9Z-octadecenoyl)-2-octadecanoyl-sn-glycero-3-phosphate + CoA. The enzyme catalyses nonadecanoyl-CoA + 1-(9Z-octadecenoyl)-sn-glycero-3-phosphate = 1-(9Z)-octadecenoyl-2-nonadecanoyl-sn-glycero-3-phosphate + CoA. The catalysed reaction is 1-(9Z-octadecenoyl)-sn-glycero-3-phosphoethanolamine + (9Z)-octadecenoyl-CoA = 1,2-di-(9Z-octadecenoyl)-sn-glycero-3-phosphoethanolamine + CoA. It catalyses the reaction 1-(9Z-octadecenoyl)-sn-glycero-3-phosphocholine + (9Z)-octadecenoyl-CoA = 1,2-di-(9Z-octadecenoyl)-sn-glycero-3-phosphocholine + CoA. It carries out the reaction 1-(9Z-octadecenoyl)-sn-glycero-3-phospho-(1D-myo-inositol) + (5Z,8Z,11Z,14Z)-eicosatetraenoyl-CoA = 1-(9Z-octadecenoyl)-2-(5Z,8Z,11Z,14Z-eicosatetraenoyl)-sn-glycero-3-phospho-1D-myo-inositol + CoA. The enzyme catalyses 1-(9Z-octadecenoyl)-sn-glycero-3-phospho-L-serine + (9Z)-octadecenoyl-CoA = 1,2-di-(9Z)-octadecenoyl-sn-glycero-3-phospho-L-serine + CoA. The catalysed reaction is 1-(9Z-octadecenoyl)-sn-glycero-3-phospho-L-serine + (5Z,8Z,11Z,14Z)-eicosatetraenoyl-CoA = 1-(9Z-octadecenoyl)-2-(5Z,8Z,11Z,14Z-eicosatetraenoyl)-sn-glycero-3-phospho-L-serine + CoA. It catalyses the reaction 1-hexadecanoyl-sn-glycero-3-phosphate + (9Z)-octadecenoyl-CoA = 1-hexadecanoyl-2-(9Z-octadecenoyl)-sn-glycero-3-phosphate + CoA. It carries out the reaction 1-heptadecanoyl-sn-glycero-3-phosphate + (9Z)-octadecenoyl-CoA = 1-heptadecanoyl-2-(9Z)-octadecenoyl-sn-glycero-3-phosphate + CoA. The enzyme catalyses 1-(5Z,8Z,11Z,14Z-eicosatetraenoyl)-sn-glycero-3-phosphate + (9Z)-octadecenoyl-CoA = 1-(5Z,8Z,11Z,14Z)-eicosatetraenoyl-2-(9Z)-octadecenoyl-sn-glycero-3-phosphate + CoA. The catalysed reaction is 1-octadecanoyl-sn-glycero-3-phosphate + (9Z)-octadecenoyl-CoA = 1-octadecanoyl-2-(9Z-octadecenoyl)-sn-glycero-3-phosphate + CoA. It catalyses the reaction 1-(9Z-octadecenoyl)-sn-glycero-3-phosphate + (5Z,8Z,11Z,14Z)-eicosatetraenoyl-CoA = 1-(9Z)-octadecenoyl-2-(5Z,8Z,11Z,14Z)-eicosatetraenoyl-sn-glycero-3-phosphate + CoA. It carries out the reaction heptadecanoyl-CoA + 1-(9Z-octadecenoyl)-sn-glycero-3-phosphate = 1-(9Z)-octadecenoyl-2-heptadecanoyl-sn-glycero-3-phosphate + CoA. The enzyme catalyses 1-(9Z-octadecenoyl)-sn-glycero-3-phosphocholine + (5Z,8Z,11Z,14Z)-eicosatetraenoyl-CoA = 1-(9Z)-octadecenoyl-2-(5Z,8Z,11Z,14Z)-icosatetraenoyl-sn-glycero-3-phosphocholine + CoA. The catalysed reaction is 1-(9Z-octadecenoyl)-sn-glycero-3-phosphate + (9Z)-octadecenoyl-CoA = 1,2-di-(9Z-octadecenoyl)-sn-glycero-3-phosphate + CoA. It catalyses the reaction 1-(9Z-octadecenoyl)-sn-glycero-3-phosphate + hexadecanoyl-CoA = 1-hexadecanoyl-2-(9Z-octadecenoyl)-sn-glycero-3-phosphate + CoA. The protein operates within phospholipid metabolism; CDP-diacylglycerol biosynthesis; CDP-diacylglycerol from sn-glycerol 3-phosphate: step 2/3. Converts 1-acyl-sn-glycerol-3-phosphate (lysophosphatidic acid or LPA) into 1,2-diacyl-sn-glycerol-3-phosphate (phosphatidic acid or PA) by incorporating an acyl moiety at the sn-2 position of the glycerol backbone. Acts on LPA containing saturated or unsaturated fatty acids C15:0-C20:4 at the sn-1 position using C18:1-CoA as the acyl donor. Also acts on lysophosphatidylethanolamine using oleoyl-CoA, but not arachidonoyl-CoA, and lysophosphatidylinositol using arachidonoyl-CoA, but not oleoyl-CoA. Activity toward lysophosphatidylglycerol not detectable. This Mus musculus (Mouse) protein is 1-acyl-sn-glycerol-3-phosphate acyltransferase epsilon (Agpat5).